We begin with the raw amino-acid sequence, 201 residues long: Outer-membrane lipoprotein carrier protein (201 aa).

The N-terminal stretch at 1 to 21 (MKKVLLTVCAIALFGSQAAWA) is a signal peptide.

Belongs to the LolA family. As to quaternary structure, monomer.

Its subcellular location is the periplasm. Its function is as follows. Participates in the translocation of lipoproteins from the inner membrane to the outer membrane. Only forms a complex with a lipoprotein if the residue after the N-terminal Cys is not an aspartate (The Asp acts as a targeting signal to indicate that the lipoprotein should stay in the inner membrane). In Proteus mirabilis (strain HI4320), this protein is Outer-membrane lipoprotein carrier protein.